Reading from the N-terminus, the 351-residue chain is Nicotinate-nucleotide--dimethylbenzimidazole phosphoribosyltransferase (351 aa).

The active-site Proton acceptor is the Glu313.

The protein belongs to the CobT family.

The catalysed reaction is 5,6-dimethylbenzimidazole + nicotinate beta-D-ribonucleotide = alpha-ribazole 5'-phosphate + nicotinate + H(+). It participates in nucleoside biosynthesis; alpha-ribazole biosynthesis; alpha-ribazole from 5,6-dimethylbenzimidazole: step 1/2. In terms of biological role, catalyzes the synthesis of alpha-ribazole-5'-phosphate from nicotinate mononucleotide (NAMN) and 5,6-dimethylbenzimidazole (DMB). In Mycobacterium leprae (strain Br4923), this protein is Nicotinate-nucleotide--dimethylbenzimidazole phosphoribosyltransferase.